Here is a 377-residue protein sequence, read N- to C-terminus: Phospho-N-acetylmuramoyl-pentapeptide-transferase (377 aa).

Transmembrane regions (helical) follow at residues 9–29 (YITL…LVAG), 62–82 (MGGA…ADWI), 85–105 (FVWV…MDDY), 122–142 (FFWQ…AVSA), 155–175 (WVGS…VPFF), 178–198 (VSYP…IVGT), 210–230 (GLAI…AYVV), 247–267 (AAEL…FLWF), 274–294 (VFMG…IAVI), 299–319 (IVLF…MVQV), and 354–374 (QVVV…LSTL).

Belongs to the glycosyltransferase 4 family. MraY subfamily. Mg(2+) is required as a cofactor.

The protein resides in the cell inner membrane. The catalysed reaction is UDP-N-acetyl-alpha-D-muramoyl-L-alanyl-gamma-D-glutamyl-meso-2,6-diaminopimeloyl-D-alanyl-D-alanine + di-trans,octa-cis-undecaprenyl phosphate = di-trans,octa-cis-undecaprenyl diphospho-N-acetyl-alpha-D-muramoyl-L-alanyl-D-glutamyl-meso-2,6-diaminopimeloyl-D-alanyl-D-alanine + UMP. The protein operates within cell wall biogenesis; peptidoglycan biosynthesis. In terms of biological role, catalyzes the initial step of the lipid cycle reactions in the biosynthesis of the cell wall peptidoglycan: transfers peptidoglycan precursor phospho-MurNAc-pentapeptide from UDP-MurNAc-pentapeptide onto the lipid carrier undecaprenyl phosphate, yielding undecaprenyl-pyrophosphoryl-MurNAc-pentapeptide, known as lipid I. This is Phospho-N-acetylmuramoyl-pentapeptide-transferase from Bordetella parapertussis (strain 12822 / ATCC BAA-587 / NCTC 13253).